Consider the following 439-residue polypeptide: Glucose-1-phosphate adenylyltransferase (439 aa).

Alpha-D-glucose 1-phosphate-binding positions include tyrosine 122, glycine 187, 202 to 203 (EK), and serine 220.

The protein belongs to the bacterial/plant glucose-1-phosphate adenylyltransferase family. As to quaternary structure, homotetramer.

It carries out the reaction alpha-D-glucose 1-phosphate + ATP + H(+) = ADP-alpha-D-glucose + diphosphate. It functions in the pathway glycan biosynthesis; glycogen biosynthesis. Its function is as follows. Involved in the biosynthesis of ADP-glucose, a building block required for the elongation reactions to produce glycogen. Catalyzes the reaction between ATP and alpha-D-glucose 1-phosphate (G1P) to produce pyrophosphate and ADP-Glc. In Thiobacillus denitrificans (strain ATCC 25259 / T1), this protein is Glucose-1-phosphate adenylyltransferase.